Consider the following 400-residue polypeptide: Carnosine N-methyltransferase (400 aa).

The interval 1–51 (MQRRQRAPPASQPAQDGGRSEDVEVQFSAGRLGSAAPAGPPARGTAEDEER) is disordered. Over residues 28–44 (SAGRLGSAAPAGPPARG) the composition is skewed to low complexity. Positions 155, 158, 199, 220, 286, 287, and 303 each coordinate S-adenosyl-L-methionine. Asp307 serves as a coordination point for carnosine. Tyr315 contacts S-adenosyl-L-methionine. Residues His338 and Tyr389 each coordinate carnosine.

This sequence belongs to the carnosine N-methyltransferase family. As to quaternary structure, homodimer. Each monomer accommodates one molecule of carnosine in its active pocket, precisely anchoring the histidine imidazole ring such that only N1 is exposed and deprotonated for methylation.

The protein localises to the cytoplasm. Its subcellular location is the cytosol. The protein resides in the nucleus. It catalyses the reaction carnosine + S-adenosyl-L-methionine = anserine + S-adenosyl-L-homocysteine + H(+). Its function is as follows. N-methyltransferase that catalyzes the formation of anserine (beta-alanyl-N(Pi)-methyl-L-histidine) from carnosine. Anserine, a methylated derivative of carnosine (beta-alanyl-L-histidine), is an abundant constituent of vertebrate skeletal muscles. Also methylates other L-histidine-containing di- and tripeptides such as Gly-Gly-His, Gly-His and homocarnosine (GABA-His). This is Carnosine N-methyltransferase from Mus musculus (Mouse).